The chain runs to 348 residues: MTAPSQVLKIRRPDDWHLHLRDGDMLKTVVPYTSEIYGRAIVMPNLAPPVTTVEAAVAYRQRILDAVPAGHDFTPLMTCYLTDSLDPNELERGFNEAVFTAAKLYPANATTNSSHGVTSIDAIMPVLERMEKIGMPLLVHGEVTHADIDIFDREARFIESVMEPLRQRLTALKVVFEHITTKDAADYVRDGNERLAATITPQHLMFNRNHMLVGGVRPHLYCLPILKRNIHQQALRELVTSGFNRVFLGTDSAPHARHRKESSCGCAGCFNAPTALGSYATVFEEMNALQHFEAFCSVNGPQFYGLPVNDTFIELVREEQQVAESIALTDDTLVPFLAGETVRWSVKQ.

Zn(2+)-binding residues include His-17 and His-19. Substrate-binding positions include 19 to 21 (HLR) and Asn-45. Positions 103, 140, and 178 each coordinate Zn(2+). Lys-103 is subject to N6-carboxylysine. Position 140 (His-140) interacts with substrate. Leu-223 lines the substrate pocket. Asp-251 contacts Zn(2+). Asp-251 is a catalytic residue. Positions 255 and 267 each coordinate substrate.

Belongs to the metallo-dependent hydrolases superfamily. DHOase family. Class II DHOase subfamily. In terms of assembly, homodimer. It depends on Zn(2+) as a cofactor.

It carries out the reaction (S)-dihydroorotate + H2O = N-carbamoyl-L-aspartate + H(+). Its pathway is pyrimidine metabolism; UMP biosynthesis via de novo pathway; (S)-dihydroorotate from bicarbonate: step 3/3. Functionally, catalyzes the reversible cyclization of carbamoyl aspartate to dihydroorotate. In Shigella flexneri serotype 5b (strain 8401), this protein is Dihydroorotase.